The primary structure comprises 215 residues: Peroxiredoxin (215 aa).

One can recognise a Thioredoxin domain in the interval 3-158; the sequence is PLLGDNFPEI…ILRAVKALQV (156 aa). Cys45 functions as the Cysteine sulfenic acid (-SOH) intermediate in the catalytic mechanism. Arg121 is a substrate binding site. Cys205 and Cys211 form a disulfide bridge.

The protein belongs to the peroxiredoxin family. Prx6 subfamily. As to quaternary structure, homodecamer. Pentamer of dimers that assemble into a ring structure.

Its subcellular location is the cytoplasm. It catalyses the reaction a hydroperoxide + [thioredoxin]-dithiol = an alcohol + [thioredoxin]-disulfide + H2O. Functionally, thiol-specific peroxidase that catalyzes the reduction of hydrogen peroxide and organic hydroperoxides to water and alcohols, respectively. Plays a role in cell protection against oxidative stress by detoxifying peroxides. This chain is Peroxiredoxin, found in Archaeoglobus fulgidus (strain ATCC 49558 / DSM 4304 / JCM 9628 / NBRC 100126 / VC-16).